Reading from the N-terminus, the 974-residue chain is Probable proton ATPase 1A (974 aa).

Residues 1-23 (MSSKKYELDAAAFEDKPESHSDA) are compositionally biased toward basic and acidic residues. Residues 1–61 (MSSKKYELDA…ATDLLPPSKG (61 aa)) are disordered. Over 1-92 (MSSKKYELDA…KTPSWLIYVR (92 aa)) the chain is Cytoplasmic. The helical transmembrane segment at 93–112 (GLWGPMPAALWIAIIIEFAL) threads the bilayer. At 113 to 117 (ENWPD) the chain is on the extracellular side. The helical transmembrane segment at 118–137 (GAILFAIQIANATIGWYETI) threads the bilayer. The Cytoplasmic segment spans residues 138 to 264 (KAGDAVAALK…LGNIHVILRR (127 aa)). Residues 265-286 (VMFSLCAISFMLCMCCFIYLLA) traverse the membrane as a helical segment. Residues 287 to 294 (RFYETFRH) lie on the Extracellular side of the membrane. A helical transmembrane segment spans residues 295-321 (ALQFAVVVLVVSIPIALEIVVTTTLAV). The Cytoplasmic segment spans residues 322 to 630 (GSKHLSKHKI…AVHGATDAAR (309 aa)). Asp-351 (4-aspartylphosphate intermediate) is an active-site residue. Positions 605 and 609 each coordinate Mg(2+). The helical transmembrane segment at 631-651 (AAADMVLTEPGLSVVVEAMLV) threads the bilayer. Residues 652–661 (SREVFQRMLS) lie on the Extracellular side of the membrane. A helical transmembrane segment spans residues 662–684 (FLTYRISATLQLVCFFFIACFSL). The Cytoplasmic segment spans residues 685–697 (TPKAYGSVDPHFQ). Residues 698–712 (FFHLPVLMFMLITLL) form a helical membrane-spanning segment. The Extracellular segment spans residues 713-737 (NDGCLMTIGYDHVIPSERPQKWNLP). A Mg(2+)-binding site is contributed by Asp-714. A helical transmembrane segment spans residues 738 to 761 (VVFVSASILAAVACGSSLMLLWIG). Topologically, residues 762-812 (LEGYSSQYYENSWFHRLGLAQLPQGKLVTMMYLKISISDFLTLFSSRTGGH) are cytoplasmic. Residues 813 to 840 (FFFYMPPSPILFCGAIISLLVSTMAASF) form a helical membrane-spanning segment. Over 841 to 868 (WHKSRPDNVLTEGLAWGQTNAEKLLPLW) the chain is Extracellular. Residues 869-887 (VWIYCIVWWFVQDVVKVLA) form a helical membrane-spanning segment. Residues 888–974 (HICMDAVDLF…VNVYVSRDQK (87 aa)) lie on the Cytoplasmic side of the membrane. The span at 950 to 959 (GLREDTHSPI) shows a compositional bias: basic and acidic residues. Residues 950–974 (GLREDTHSPIEEASPVNVYVSRDQK) form a disordered region.

This sequence belongs to the cation transport ATPase (P-type) (TC 3.A.3) family. Type IIIA subfamily.

The protein resides in the membrane. It carries out the reaction ATP + H2O + H(+)(in) = ADP + phosphate + 2 H(+)(out). The polypeptide is Probable proton ATPase 1A (H1A) (Leishmania donovani).